The chain runs to 895 residues: Splicing factor 3B subunit 2 (895 aa).

Residues 1–10 (MATEHPEPPK) show a composition bias toward basic and acidic residues. Disordered stretches follow at residues 1–24 (MATE…PGHY), 65–136 (LNRP…LRVG), 197–373 (AKMG…EYVT), and 400–453 (KKEK…SKKK). A Glycyl lysine isopeptide (Lys-Gly) (interchain with G-Cter in SUMO2) cross-link involves residue lysine 10. Residues 24 to 58 (YGAWAAQELQAKLAEIGAPIQGNREELVERLQSYT) enclose the SAP domain. 2 stretches are compositionally biased toward pro residues: residues 90-114 (IPMP…PPPG) and 122-133 (AHPPNLGPPPPL). Residues 140–199 (ALSEEERLKLAQQQAALLMQQEERAKQQGDHSLKEHELLEQQKRAAVLLEQERQQEIAKM) are a coiled coil. A compositionally biased stretch (low complexity) spans 218 to 238 (PLGPRVAAPVGPVGPTPTVLP). Residues arginine 222, arginine 245, and arginine 247 each carry the omega-N-methylarginine modification. Residues 241–254 (APVPRPRGPPPPPG) show a composition bias toward pro residues. An N6-acetyllysine modification is found at lysine 275. The segment covering 277-286 (LQLKESRQEE) has biased composition (basic and acidic residues). Residue lysine 280 forms a Glycyl lysine isopeptide (Lys-Gly) (interchain with G-Cter in SUMO2) linkage. Serine 289 carries the phosphoserine modification. Phosphothreonine is present on threonine 298. Serine 307 and serine 309 each carry phosphoserine. Threonine 311 carries the post-translational modification Phosphothreonine. Position 317 is a phosphoserine (serine 317). Residues 322 to 338 (EKNRKRRNRKKKKKPQR) show a composition bias toward basic residues. Residues 347–359 (SGDREKDSTRSRG) are compositionally biased toward basic and acidic residues. Serine 360 and serine 362 each carry phosphoserine. Residues lysine 400 and lysine 412 each participate in a glycyl lysine isopeptide (Lys-Gly) (interchain with G-Cter in SUMO2) cross-link. 2 stretches are compositionally biased toward basic and acidic residues: residues 400 to 414 (KKEK…DKLE) and 422 to 431 (KGFEEEHKDS). The required for interaction with PRMT9 stretch occupies residues 401–550 (KEKEKEPEKL…QEKEEQKTMK (150 aa)). Serine 431, serine 435, and serine 436 each carry phosphoserine. Residue lysine 492 forms a Glycyl lysine isopeptide (Lys-Gly) (interchain with G-Cter in SUMO2) linkage. Arginine 508 bears the Omega-N-methylarginine; by PRMT9; alternate mark. Arginine 508 carries the post-translational modification Symmetric dimethylarginine; by PRMT9; alternate. Arginine 515 carries the post-translational modification Omega-N-methylarginine. A Glycyl lysine isopeptide (Lys-Gly) (interchain with G-Cter in SUMO2) cross-link involves residue lysine 543. The segment at 691-757 (AAEFQTKTEE…PGGFSSVPAG (67 aa)) is disordered. Residues 712-732 (EPSDEESSEEEEEEESDEDKP) show a composition bias toward acidic residues. A Glycyl lysine isopeptide (Lys-Gly) (interchain with G-Cter in SUMO2) cross-link involves residue lysine 770. Threonine 780 is subject to Phosphothreonine. Residues lysine 790, lysine 843, and lysine 857 each participate in a glycyl lysine isopeptide (Lys-Gly) (interchain with G-Cter in SUMO2) cross-link. Residues 844 to 869 (YEEHVREQQAQVEKEDFSDMVAEHAA) are compositionally biased toward basic and acidic residues. A disordered region spans residues 844 to 895 (YEEHVREQQAQVEKEDFSDMVAEHAAKQKQKKRKAQPQDSRGGSKKYKEFKF). Serine 861 carries the phosphoserine modification.

As to quaternary structure, component of the 17S U2 SnRNP complex, a ribonucleoprotein complex that contains small nuclear RNA (snRNA) U2 and a number of specific proteins. Part of the SF3B subcomplex of the 17S U2 SnRNP complex. SF3B associates with the splicing subcomplex SF3A and a 12S RNA unit to form the U2 small nuclear ribonucleoproteins complex (U2 snRNP). Within the SF3B complex, interacts directly with SF3B4. Found in a complex with PRMT9, SF3B2 and SF3B4. Interacts (Arg-508-methylated form) with SMN1 (via Tudor domain). Interacts with RBM7. Interacts with ERCC6. Component of the minor spliceosome. Within this complex, interacts with SCNM1 and CRIPT. In terms of assembly, (Microbial infection) Interacts with HIV-1 Vpr. Post-translationally, methylation at Arg-508 by PRMT9 is required for the interaction with SMN1.

It localises to the nucleus. Its subcellular location is the nucleus speckle. In terms of biological role, component of the 17S U2 SnRNP complex of the spliceosome, a large ribonucleoprotein complex that removes introns from transcribed pre-mRNAs. The 17S U2 SnRNP complex (1) directly participates in early spliceosome assembly and (2) mediates recognition of the intron branch site during pre-mRNA splicing by promoting the selection of the pre-mRNA branch-site adenosine, the nucleophile for the first step of splicing. Within the 17S U2 SnRNP complex, SF3B2 is part of the SF3B subcomplex, which is required for 'A' complex assembly formed by the stable binding of U2 snRNP to the branchpoint sequence in pre-mRNA. Sequence independent binding of SF3A and SF3B subcomplexes upstream of the branch site is essential, it may anchor U2 snRNP to the pre-mRNA. May also be involved in the assembly of the 'E' complex. Also acts as a component of the minor spliceosome, which is involved in the splicing of U12-type introns in pre-mRNAs. The chain is Splicing factor 3B subunit 2 (SF3B2) from Homo sapiens (Human).